The chain runs to 90 residues: Probable Fe(2+)-trafficking protein (90 aa).

Belongs to the Fe(2+)-trafficking protein family.

Functionally, could be a mediator in iron transactions between iron acquisition and iron-requiring processes, such as synthesis and/or repair of Fe-S clusters in biosynthetic enzymes. This chain is Probable Fe(2+)-trafficking protein, found in Acidovorax ebreus (strain TPSY) (Diaphorobacter sp. (strain TPSY)).